Consider the following 159-residue polypeptide: Transcription elongation factor GreA (159 aa).

The stretch at 5–77 (REVVLTAQGL…LETMLRKAVI (73 aa)) forms a coiled coil.

The protein belongs to the GreA/GreB family.

In terms of biological role, necessary for efficient RNA polymerase transcription elongation past template-encoded arresting sites. The arresting sites in DNA have the property of trapping a certain fraction of elongating RNA polymerases that pass through, resulting in locked ternary complexes. Cleavage of the nascent transcript by cleavage factors such as GreA or GreB allows the resumption of elongation from the new 3'terminus. GreA releases sequences of 2 to 3 nucleotides. The sequence is that of Transcription elongation factor GreA from Alkaliphilus oremlandii (strain OhILAs) (Clostridium oremlandii (strain OhILAs)).